Consider the following 147-residue polypeptide: Phospholipase A2 inhibitor subunit B (147 aa).

The region spanning 62 to 143 is the C-type lectin domain; the sequence is EICEEAGGHI…DEKLLVVCEF (82 aa). Intrachain disulfides connect C64–C141 and C119–C133. The N-linked (GlcNAc...) asparagine glycan is linked to N103.

Belongs to the alpha-type phospholipase A2 inhibitor family. As to quaternary structure, homo- or heterotrimer; homotrimer of PLI-A chains, two PLI-A and one PLI-B chains, one PLI-A and two PLI-B chains, and homotrimer of PLI-B chains (with a ratio of 1:3:3:1). Expressed by the liver.

Its subcellular location is the secreted. Functionally, PLI binds directly phospholipase A2 in the presence or absence of calcium. Inhibitory activity of the PLI-B homotrimer is less specific than that of the PLI-A homotrimer. The protein is Phospholipase A2 inhibitor subunit B of Protobothrops flavoviridis (Habu).